The following is a 153-amino-acid chain: Large ribosomal subunit protein uL23m (153 aa).

The disordered stretch occupies residues 131–153 (MADEQQRQGSDPQRGGVPNWFSL).

Belongs to the universal ribosomal protein uL23 family. In terms of assembly, component of the mitochondrial ribosome large subunit (39S) which comprises a 16S rRNA and about 50 distinct proteins.

The protein resides in the mitochondrion. The sequence is that of Large ribosomal subunit protein uL23m (MRPL23) from Otolemur garnettii (Small-eared galago).